Here is a 1753-residue protein sequence, read N- to C-terminus: Negative regulator of sporulation PMD1 (1753 aa).

2 Kelch repeats span residues 143-198 and 206-253; these read NIYI…VLNE and KLII…KILV. T298 is subject to Phosphothreonine. Over residues 651–664 the composition is skewed to polar residues; that stretch reads TTKFGNSSQSSNGS. Disordered stretches follow at residues 651-753 and 771-807; these read TTKF…TTCS and LGLS…CTLS. Low complexity predominate over residues 670–683; sequence SKNGNSKSNSNTSL. Composition is skewed to polar residues over residues 690-699, 740-753, 774-783, and 797-807; these read DFTSSTSSPK, TGTS…TTCS, SEQSGRSTRA, and NDGNDSNCTLS. Residue S838 is modified to Phosphoserine. Disordered regions lie at residues 875–915, 938–957, and 962–988; these read IASP…LGSS, PLEP…SSLA, and FGRD…ARRI. Residues 880-900 show a composition bias toward low complexity; that stretch reads QSRQTSFASTASTASVVSSTS. Pro residues predominate over residues 938 to 947; it reads PLEPLPPVPK. Low complexity predominate over residues 979-988; sequence KSSSSDARRI. S1289, S1307, and S1356 each carry phosphoserine. Disordered regions lie at residues 1312 to 1467, 1604 to 1686, and 1706 to 1753; these read SPAT…DLDS, PIFA…NKRF, and SAVN…GKRR. Positions 1344–1379 are enriched in polar residues; the sequence is VSRQQNFPRRSSSFTETVPTEPTRYNYQNLDSSKSN. Basic and acidic residues predominate over residues 1399 to 1430; sequence NFDKYKVETLQKRNSNDGKDLDRTNDPLKNRG. The segment covering 1653–1677 has biased composition (polar residues); the sequence is IKFSQAPSTQISPRTSVTDFTASQQ. Position 1664 is a phosphoserine (S1664). The span at 1711-1723 shows a compositional bias: basic and acidic residues; it reads GRKESEGHCEDRS.

It is found in the cytoplasm. Functionally, negatively regulates early sporulation-specific genes. Seems to exert its function by positively regulating the Ras/cAMP pathway. Required for growth under alkaline conditions. Acts synergetically with MDS3. This chain is Negative regulator of sporulation PMD1 (PMD1), found in Saccharomyces cerevisiae (strain ATCC 204508 / S288c) (Baker's yeast).